Here is a 216-residue protein sequence, read N- to C-terminus: Transmembrane emp24 domain-containing protein eca (216 aa).

Positions methionine 1 to glycine 20 are cleaved as a signal peptide. The Lumenal segment spans residues leucine 21–serine 182. Residues arginine 30–valine 126 enclose the GOLD domain. A coiled-coil region spans residues alanine 134–asparagine 164. A helical membrane pass occupies residues arginine 183–methionine 203. Topologically, residues arginine 204–valine 216 are cytoplasmic. Residues lysine 213–valine 216 carry the Prevents secretion from ER motif.

It belongs to the EMP24/GP25L family.

The protein resides in the endoplasmic reticulum membrane. Functionally, eca and bai are essential, though not redundant, for dorsoventral patterning of the embryo. Specifically required during early embryogenesis for the activity of maternal tkv, while the zygotic tkv is not affected. Involved in Golgi organization. This Drosophila pseudoobscura pseudoobscura (Fruit fly) protein is Transmembrane emp24 domain-containing protein eca.